A 435-amino-acid polypeptide reads, in one-letter code: Trigger factor (435 aa).

The PPIase FKBP-type domain maps to 163–248 (GELASVTFSA…VHAVKERKMP (86 aa)).

This sequence belongs to the FKBP-type PPIase family. Tig subfamily.

It is found in the cytoplasm. The catalysed reaction is [protein]-peptidylproline (omega=180) = [protein]-peptidylproline (omega=0). Involved in protein export. Acts as a chaperone by maintaining the newly synthesized protein in an open conformation. Functions as a peptidyl-prolyl cis-trans isomerase. This chain is Trigger factor, found in Maridesulfovibrio salexigens (strain ATCC 14822 / DSM 2638 / NCIMB 8403 / VKM B-1763) (Desulfovibrio salexigens).